A 555-amino-acid chain; its full sequence is Dihydroxy-acid dehydratase (555 aa).

C46 is a binding site for [2Fe-2S] cluster. D78 serves as a coordination point for Mg(2+). C119 serves as a coordination point for [2Fe-2S] cluster. Mg(2+) contacts are provided by D120 and K121. N6-carboxylysine is present on K121. A [2Fe-2S] cluster-binding site is contributed by C191. E442 serves as a coordination point for Mg(2+). The Proton acceptor role is filled by S468.

It belongs to the IlvD/Edd family. In terms of assembly, homodimer. It depends on [2Fe-2S] cluster as a cofactor. Requires Mg(2+) as cofactor.

It catalyses the reaction (2R)-2,3-dihydroxy-3-methylbutanoate = 3-methyl-2-oxobutanoate + H2O. It carries out the reaction (2R,3R)-2,3-dihydroxy-3-methylpentanoate = (S)-3-methyl-2-oxopentanoate + H2O. The protein operates within amino-acid biosynthesis; L-isoleucine biosynthesis; L-isoleucine from 2-oxobutanoate: step 3/4. Its pathway is amino-acid biosynthesis; L-valine biosynthesis; L-valine from pyruvate: step 3/4. Functionally, functions in the biosynthesis of branched-chain amino acids. Catalyzes the dehydration of (2R,3R)-2,3-dihydroxy-3-methylpentanoate (2,3-dihydroxy-3-methylvalerate) into 2-oxo-3-methylpentanoate (2-oxo-3-methylvalerate) and of (2R)-2,3-dihydroxy-3-methylbutanoate (2,3-dihydroxyisovalerate) into 2-oxo-3-methylbutanoate (2-oxoisovalerate), the penultimate precursor to L-isoleucine and L-valine, respectively. The protein is Dihydroxy-acid dehydratase of Thermus thermophilus (strain ATCC 27634 / DSM 579 / HB8).